Here is a 54-residue protein sequence, read N- to C-terminus: MNYWVLALYYEWATTDMVKQALAYEDCSIQDLAEGVNKKLITADQYKEITGKAM.

It to B.subtilis YqcE.

In Bacillus subtilis (strain 168), this protein is Phage-like element PBSX protein XkdX (xkdX).